Consider the following 1036-residue polypeptide: ADAMTS-like protein 4 (1036 aa).

The signal sequence occupies residues 1–24 (MESWLGRLWLCMMLLLPLPQPCQD). A TSP type-1 1 domain is found at 47-91 (GPWGRWASCSQPCGVGVQRRSRTCELHPALPLPPRPPRHPEAHRP). 2 disordered regions span residues 73-149 (HPAL…IKPG) and 163-308 (HRSR…WLPL). Basic residues predominate over residues 163–173 (HRSRRHPHRPG). Residues 215–253 (TPRSGTAQTEVLPRTSSAPSYTGTPAPTSSFGDSRSFQG) are compositionally biased toward polar residues. Residues N454 and N737 are each glycosylated (N-linked (GlcNAc...) asparagine). 5 TSP type-1 domains span residues 687–748 (CPPY…HLCG), 750–804 (WEIS…DMGP), 805–871 (CTTA…GPCE), 872–931 (RTWR…QGQA), and 932–988 (CEDK…QPCN). In terms of domain architecture, PLAC spans 991–1028 (PDDQCKDSSPHCPLVVQARLCVYPYYTTTCCRSCAHVL).

Interacts with CTSB. Interacts with FBN1. In terms of processing, glycosylated. Can be O-fucosylated by POFUT2 on a serine or a threonine residue found within the consensus sequence C1-X(2)-(S/T)-C2-G of the TSP type-1 repeat domains where C1 and C2 are the first and second cysteine residue of the repeat, respectively. Fucosylated repeats can then be further glycosylated by the addition of a beta-1,3-glucose residue by the glucosyltransferase, B3GALTL. Fucosylation mediates the efficient secretion of ADAMTS family members. Can also be C-glycosylated with one or two mannose molecules on tryptophan residues within the consensus sequence W-X-X-W of the TPRs, and N-glycosylated. These other glycosylations can also facilitate secretion. As to expression, widely expressed in a range of tissues. Especially prevalent in brain, spinal cord, muscle, lung and heart.

The protein resides in the secreted. It is found in the extracellular space. The protein localises to the extracellular matrix. Its function is as follows. Positive regulation of apoptosis. May facilitate FBN1 microfibril biogenesis. The sequence is that of ADAMTS-like protein 4 from Mus musculus (Mouse).